A 133-amino-acid chain; its full sequence is S-adenosylmethionine decarboxylase proenzyme (133 aa).

Ser64 functions as the Schiff-base intermediate with substrate; via pyruvic acid in the catalytic mechanism. Ser64 is subject to Pyruvic acid (Ser); by autocatalysis. Catalysis depends on His69, which acts as the Proton acceptor; for processing activity. Cys84 acts as the Proton donor; for catalytic activity in catalysis.

Belongs to the prokaryotic AdoMetDC family. Type 1 subfamily. Heterotetramer of two alpha and two beta chains arranged as a dimer of alpha/beta heterodimers. The cofactor is pyruvate. Is synthesized initially as an inactive proenzyme. Formation of the active enzyme involves a self-maturation process in which the active site pyruvoyl group is generated from an internal serine residue via an autocatalytic post-translational modification. Two non-identical subunits are generated from the proenzyme in this reaction, and the pyruvate is formed at the N-terminus of the alpha chain, which is derived from the carboxyl end of the proenzyme. The post-translation cleavage follows an unusual pathway, termed non-hydrolytic serinolysis, in which the side chain hydroxyl group of the serine supplies its oxygen atom to form the C-terminus of the beta chain, while the remainder of the serine residue undergoes an oxidative deamination to produce ammonia and the pyruvoyl group blocking the N-terminus of the alpha chain.

It carries out the reaction S-adenosyl-L-methionine + H(+) = S-adenosyl 3-(methylsulfanyl)propylamine + CO2. It functions in the pathway amine and polyamine biosynthesis; S-adenosylmethioninamine biosynthesis; S-adenosylmethioninamine from S-adenosyl-L-methionine: step 1/1. Functionally, catalyzes the decarboxylation of S-adenosylmethionine to S-adenosylmethioninamine (dcAdoMet), the propylamine donor required for the synthesis of the polyamines spermine and spermidine from the diamine putrescine. The protein is S-adenosylmethionine decarboxylase proenzyme of Sulfurihydrogenibium sp. (strain YO3AOP1).